The chain runs to 143 residues: MSFLFFLVVLISIGLWVGPCVADNPENRCIKQFAKTNPACIVHCKYNLYKFTDDNYDITDQHINKFTDVLIKNKAVDGSKKSQVQEHLKKCAEESLKKTHGKNCQRLVEYYSCAVDNKLIDYFKYESAINSYDRSIYTPPYSG.

Positions 1–22 are cleaved as a signal peptide; that stretch reads MSFLFFLVVLISIGLWVGPCVA.

As to quaternary structure, interacts with human F12 (inactive). As to expression, salivary gland.

It localises to the secreted. Its function is as follows. Inhibits the intrinsic blood coagulation pathway in the host by blocking activation of host coagulation factor XII (F12). The polypeptide is Ayaconin (Lutzomyia ayacuchensis (Sand fly)).